We begin with the raw amino-acid sequence, 469 residues long: MWRDKVKEYEDFILEDLKGLLSIESVREDDKASAENPVGPGPRQALDYMYKIAERDGFGTHDVDHIAGRIEAGKGDDVFGILCHVDVVPAGDGWDSDPFNPVVTDDKIIARGTLDDKGPTIAAYYAVKILNEMNVNWKKRIHIIIGTDEESDWKCTERYFQTEEMPELGFAPDAEFPAIHGEKGISTFDVIQNEKADDQDEPEYELRSFVSGQRYNMVPDEAIANVAVKENMTDVIQNFEQYLNEHDVEGESVVDSGVLVLKVQGKAVHGMDPSIGVNAGLYLLNFLATLNLDKTAANFVAFSERYLFESHFGEKMGMKFHTDVMGDVTTNVGIITYDNQDGGKFGINLRYPEGFEFEESLTRFKGEIQSLGFSIELGKNQTPHYVEKDDPFLQSLVQAYRNQTGDDTEPYTIGGGTYARNLDKGVAFGAMFSDSEDLMHQKNEYITKKQLFNATSIYLESLYKLCVEE.

His84 contacts Zn(2+). Residue Asp86 is part of the active site. Residue Asp115 participates in Zn(2+) binding. Catalysis depends on Glu149, which acts as the Proton acceptor. Residues Glu150, Asp173, and His440 each coordinate Zn(2+).

This sequence belongs to the peptidase M20A family. The cofactor is Zn(2+).

The sequence is that of Putative dipeptidase SSP1012 from Staphylococcus saprophyticus subsp. saprophyticus (strain ATCC 15305 / DSM 20229 / NCIMB 8711 / NCTC 7292 / S-41).